Here is a 206-residue protein sequence, read N- to C-terminus: Carbonic anhydrase (206 aa).

An Isoglutamyl lysine isopeptide (Lys-Gln) (interchain with Q-Cter in protein Pup) cross-link involves residue K11. Residues C51, D53, H104, and C107 each coordinate Zn(2+).

It belongs to the beta-class carbonic anhydrase family. As to quaternary structure, homotetramer. Zn(2+) is required as a cofactor.

It carries out the reaction hydrogencarbonate + H(+) = CO2 + H2O. Catalyzes the reversible hydration of carbon dioxide to form bicarbonate. In Mycolicibacterium smegmatis (strain ATCC 700084 / mc(2)155) (Mycobacterium smegmatis), this protein is Carbonic anhydrase (cynT).